We begin with the raw amino-acid sequence, 71 residues long: Small ribosomal subunit protein bS21 (71 aa).

It belongs to the bacterial ribosomal protein bS21 family.

The sequence is that of Small ribosomal subunit protein bS21 from Vesicomyosocius okutanii subsp. Calyptogena okutanii (strain HA).